The primary structure comprises 176 residues: Ribosome maturation factor RimM (176 aa).

Residues E101 to L173 enclose the PRC barrel domain.

Belongs to the RimM family. Binds ribosomal protein uS19.

Its subcellular location is the cytoplasm. In terms of biological role, an accessory protein needed during the final step in the assembly of 30S ribosomal subunit, possibly for assembly of the head region. Essential for efficient processing of 16S rRNA. May be needed both before and after RbfA during the maturation of 16S rRNA. It has affinity for free ribosomal 30S subunits but not for 70S ribosomes. In Syntrophobacter fumaroxidans (strain DSM 10017 / MPOB), this protein is Ribosome maturation factor RimM.